The sequence spans 216 residues: MLIDKTNISNIRREYISGQLRHTDLTNQPIQLFSVWLHQAYFSKIPDPTAMCLATVDHTGQPYQRVVLLKNFTNKEMIFYTNLSSRKAMHLANNPKVSLCFLWNVIDRQVIITGSVDKLPEKEVLKYFYTRPKNNQISTWVSNQSKVISSKDLLENKFLEFKKNHLHKKVPFPEFWGGYKININSMEFWQGGTHRLHDRFIYQRYKHTWRIYRLSP.

Residues 12 to 15 (RREY) and Lys-70 contribute to the substrate site. FMN contacts are provided by residues 65-70 (RVVLLK), 80-81 (YT), Arg-86, Lys-87, and Gln-109. Substrate-binding residues include Tyr-127 and Arg-131. Residues 144–145 (QS) and Trp-189 contribute to the FMN site. Residue 195–197 (RLH) coordinates substrate. Arg-199 serves as a coordination point for FMN.

This sequence belongs to the pyridoxamine 5'-phosphate oxidase family. Homodimer. Requires FMN as cofactor.

It catalyses the reaction pyridoxamine 5'-phosphate + O2 + H2O = pyridoxal 5'-phosphate + H2O2 + NH4(+). It carries out the reaction pyridoxine 5'-phosphate + O2 = pyridoxal 5'-phosphate + H2O2. It functions in the pathway cofactor metabolism; pyridoxal 5'-phosphate salvage; pyridoxal 5'-phosphate from pyridoxamine 5'-phosphate: step 1/1. Its pathway is cofactor metabolism; pyridoxal 5'-phosphate salvage; pyridoxal 5'-phosphate from pyridoxine 5'-phosphate: step 1/1. Functionally, catalyzes the oxidation of either pyridoxine 5'-phosphate (PNP) or pyridoxamine 5'-phosphate (PMP) into pyridoxal 5'-phosphate (PLP). This is Pyridoxine/pyridoxamine 5'-phosphate oxidase from Blochmanniella pennsylvanica (strain BPEN).